Here is a 150-residue protein sequence, read N- to C-terminus: Sulfur-rich protein, serovars L1/L3 (150 aa).

A disordered region spans residues 1-20; sequence MSTVPVVQGAGSSNSAQDIS. 2 consecutive transmembrane segments (helical) span residues 43 to 63 and 69 to 89; these read VGLV…VSAA and IYLA…ILSM.

Its subcellular location is the membrane. The chain is Sulfur-rich protein, serovars L1/L3 (srp) from Chlamydia trachomatis.